A 291-amino-acid chain; its full sequence is MLILELIKGIILGIVEGLTEFAPVSSTGHMILVDDMWLKSSEFLGSQSAFTFKIVIQLGSVFAGAWVFRERYFEMLHIGKYRHEPIDGIGQKPKRLNLLHIIVGMIPAGVLGLLFDDVIQEYLFSVPTVMIGLFIGAIYMIIADIYSKKVTNPRNVDQINYFQAFVIGLSQAIAMWPGFSRSGSTISTGVLMKMNHKSASDFTFIMAVPVMLAASGLSLVKNMEYIHMSDIGFYVLGFLAAFIVGLIAIKTFLYLISKIKLIPFAIYRIVLVIIIAILYFGFGIGQGITGE.

The next 8 helical transmembrane spans lie at 1–21 (MLIL…LTEF), 48–68 (SAFT…AWVF), 99–119 (LHII…DDVI), 123–143 (LFSV…MIIA), 159–179 (INYF…WPGF), 200–220 (SDFT…LSLV), 236–256 (LGFL…LYLI), and 269–289 (IVLV…QGIT).

It belongs to the UppP family.

It localises to the cell membrane. It catalyses the reaction di-trans,octa-cis-undecaprenyl diphosphate + H2O = di-trans,octa-cis-undecaprenyl phosphate + phosphate + H(+). In terms of biological role, catalyzes the dephosphorylation of undecaprenyl diphosphate (UPP). Confers resistance to bacitracin. The sequence is that of Undecaprenyl-diphosphatase from Staphylococcus saprophyticus subsp. saprophyticus (strain ATCC 15305 / DSM 20229 / NCIMB 8711 / NCTC 7292 / S-41).